We begin with the raw amino-acid sequence, 389 residues long: Probable acyl-CoA dehydrogenase fadE25 (389 aa).

This sequence belongs to the acyl-CoA dehydrogenase family. The cofactor is FAD.

The enzyme catalyses a 2,3-saturated acyl-CoA + A = a 2,3-dehydroacyl-CoA + AH2. The protein is Probable acyl-CoA dehydrogenase fadE25 (fadE25) of Mycobacterium leprae (strain TN).